An 882-amino-acid chain; its full sequence is DNA mismatch repair protein MutS (882 aa).

An ATP-binding site is contributed by 627-634 (GPNMAGKS).

It belongs to the DNA mismatch repair MutS family.

In terms of biological role, this protein is involved in the repair of mismatches in DNA. It is possible that it carries out the mismatch recognition step. This protein has a weak ATPase activity. The sequence is that of DNA mismatch repair protein MutS from Anaeromyxobacter sp. (strain K).